Consider the following 534-residue polypeptide: ATP-dependent rRNA helicase RRP3 (534 aa).

A disordered region spans residues 67–107 (KQQALQKQQKQQKQQEQENANHNQTESSLSSSSSTTSSSIT). Low complexity-rich tracts occupy residues 68 to 80 (QQAL…QQKQ) and 91 to 107 (TESS…SSIT). The Q motif signature appears at 118-146 (KTFKELNLVPDLLESIESMKFTKPTPIQS). The region spanning 149 to 320 (IPHALEGKDI…RASLHNPVRV (172 aa)) is the Helicase ATP-binding domain. Residue 162–169 (AQTGSGKT) participates in ATP binding. The DEAD box motif lies at 268–271 (DEAD). Residues 347 to 492 (ILIHLLNEFM…EDKPPKEVLD (146 aa)) form the Helicase C-terminal domain. 2 stretches are compositionally biased toward basic and acidic residues: residues 505–517 (AIRQ…DKRN) and 525–534 (NRDDADREER). Positions 505-534 (AIRQTKEIHDKRNGGGGRRRNRDDADREER) are disordered.

The protein belongs to the DEAD box helicase family. DDX47/RRP3 subfamily. In terms of assembly, interacts with the SSU processome.

Its subcellular location is the nucleus. The enzyme catalyses ATP + H2O = ADP + phosphate + H(+). Functionally, ATP-dependent rRNA helicase required for pre-ribosomal RNA processing. Involved in the maturation of the 35S-pre-rRNA and to its cleavage to mature 18S rRNA. In Candida albicans (strain SC5314 / ATCC MYA-2876) (Yeast), this protein is ATP-dependent rRNA helicase RRP3.